The chain runs to 689 residues: MADLEAVLADVSYLMAMEKSKATPAARASKKILLPEPSIRSVMQKYLEDRGEVTFEKIFSQKLGYLLFRDFYLNHLEEAKPLVEFYEEIEKYEKLETEEERVVRSREIFDSYIMKELLACSHPFSKNATEHVQGHLVKKQVPPDLFQPYIEEICQNLRGDVFHKFIESDKFTRFCQWKNVELNIHLTMNDFSVHRIIGRGGFGEVYGCRKADTGKMYAMKCLDKKRIKMKQGETLALNERIMLSLVSTGDCPFIVCMSYAFHTPDKLSFILDLMNGGDLHYHLSQHGVFSEADMRFYAAEIILGLEHMHNRFVVYRDLKPANILLDEHGHVRISDLGLACDFSKKKPHASVGTHGYMAPEVLQKGVAYDSSADWFSLGCMLFKLLRGHSPFRQHKTKDKHEIDRMTLTMAVELPDSFSPELRSLLEGLLQRDVNRRLGCLGRGAQEIKESPFFRSLDWQMVFLQKYPPPLIPPRGEVNAADAFDIGSFDEEDTKGIKLLDSDQELYRNFPLTISERWQQEVAETVFDTINAETDRLEARKKAKNKQLGHEEDYALGKDCIMHGYMSKMGNPFLTQWQRRYFYLFPNRLEWRGEDEAPQSLLTMEEIQSVEETQIKERKCLLLKIRGGKQFVLQCDSDPELVQWKKELRDAYREAQQLVQRVPKMKNKPRSPVVELSKVPLIQRGSANGL.

The tract at residues 1 to 190 (MADLEAVLAD…ELNIHLTMND (190 aa)) is N-terminal. The 122-residue stretch at 54–175 (TFEKIFSQKL…IESDKFTRFC (122 aa)) folds into the RGS domain. The region spanning 191-453 (FSVHRIIGRG…AQEIKESPFF (263 aa)) is the Protein kinase domain. ATP-binding positions include 197–205 (IGRGGFGEV) and K220. D317 (proton acceptor) is an active-site residue. An AGC-kinase C-terminal domain is found at 454 to 521 (RSLDWQMVFL…TISERWQQEV (68 aa)). The PH domain maps to 558-652 (DCIMHGYMSK…WKKELRDAYR (95 aa)). Residue S670 is modified to Phosphoserine.

Belongs to the protein kinase superfamily. AGC Ser/Thr protein kinase family. GPRK subfamily. In terms of assembly, interacts with the heterodimer formed by GNB1 and GNG2. Interacts with GIT1. Interacts with, and phosphorylates chemokine-stimulated CCR5. Interacts with ARRB1. Interacts with LPAR1 and LPAR2. Interacts with RALA in response to LPAR1 activation. ADRBK1 and RALA mutually inhibit each other's binding to LPAR1. Interacts with ADRB2. Expressed at low levels in brain cortex, hippocampus, striatum, hypothalamus, cerebellum and brainstem (at protein level).

The protein localises to the cytoplasm. It is found in the cell membrane. It localises to the postsynapse. The protein resides in the presynapse. The enzyme catalyses [beta-adrenergic receptor] + ATP = [beta-adrenergic receptor]-phosphate + ADP + H(+). With respect to regulation, in contrast to other AGC family kinases, the catalytic activity is solely regulated by the binding of substrates and ligands, not by phosphorylation of the kinase domain. Functionally, specifically phosphorylates the agonist-occupied form of the beta-adrenergic and closely related receptors, probably inducing a desensitization of them. Key regulator of LPAR1 signaling. Competes with RALA for binding to LPAR1 thus affecting the signaling properties of the receptor. Desensitizes LPAR1 and LPAR2 in a phosphorylation-independent manner. Positively regulates ciliary smoothened (SMO)-dependent Hedgehog (Hh) signaling pathway by facilitating the trafficking of SMO into the cilium and the stimulation of SMO activity. Inhibits relaxation of airway smooth muscle in response to blue light. The polypeptide is Beta-adrenergic receptor kinase 1 (Rattus norvegicus (Rat)).